Consider the following 2409-residue polypeptide: Reducing polyketide synthase FUB1 (2409 aa).

Low complexity predominate over residues 1–43; sequence MTLSNGSNGANGTSNGHGAHPSANGFHNAANGGANNGTPNGGA. The tract at residues 1 to 49 is disordered; sequence MTLSNGSNGANGTSNGHGAHPSANGFHNAANGGANNGTPNGGAEYNASL. The 423-residue stretch at 57–479 folds into the Ketosynthase family 3 (KS3) domain; the sequence is SSAIAVIGVS…GANAHAVLDD (423 aa). Residues cysteine 230, histidine 365, and histidine 403 each act as for beta-ketoacyl synthase activity in the active site. The malonyl-CoA:ACP transacylase (MAT) domain stretch occupies residues 608–929; sequence TFIFTGQGAQ…FSAIKRKQDA (322 aa). The active-site For malonyltransferase activity is the serine 699. Residues 994–1127 are N-terminal hotdog fold; that stretch reads LELLGVRDPR…GLVSTSYKRE (134 aa). Residues 994–1307 enclose the PKS/mFAS DH domain; it reads LELLGVRDPR…TVPLRGASDP (314 aa). Residues 995–1302 are dehydratase (DH) domain; sequence ELLGVRDPRS…LEGCKTVPLR (308 aa). Residue histidine 1026 is the Proton acceptor; for dehydratase activity of the active site. Residues 1155-1307 form a C-terminal hotdog fold region; it reads LPSVDPTVFY…TVPLRGASDP (153 aa). Aspartate 1220 (proton donor; for dehydratase activity) is an active-site residue. Positions 1713-2025 are enoyl reductase (ER) domain; that stretch reads GLLDTLEYLS…SGGHVGKIVL (313 aa). Residues 2049–2225 form a ketoreductase (KR) domain region; sequence ATYVLIGGLG…AATSINLSLV (177 aa). In terms of domain architecture, Carrier spans 2328–2405; sequence EVYEIVLQQL…GFAKKVMAKS (78 aa). Serine 2365 carries the O-(pantetheine 4'-phosphoryl)serine modification.

It functions in the pathway mycotoxin biosynthesis. Its function is as follows. Reducing polyketide synthase; part of the gene cluster that mediates the biosynthesis of fusaric acid, a mycotoxin with low to moderate toxicity to animals and humans, but with high phytotoxic properties. L-aspartate is suggested as fusaric acid amino acid precursor that is activated and further processed to O-acetyl-L-homoserine by cluster enzymes aspartate kinase FUB3 and homoserine O-acetyltransferase FUB5, as well as enzymes of the primary metabolism. The polyketide synthase (PKS) FUB1 generates the triketide trans-2-hexenal which is presumptively released by the hydrolase FUB4 and linked to the NRPS-bound amino acid precursor by NAD(P)-dependent dehydrogenase FUB6. FUB1, FUB4, and the non-canonical NRPS Fub8 may form an enzyme complex. Further processing of the NRPS-bound intermediate might be carried out by FUB6 and the sulfhydrylase FUB7, enabling a spontaneous electrocyclization to close the carbon backbone of fusaric acid. Dihydrofusaric acid is likely to be released via reduction by the thioester reductase (TR) domain of FUB8 whereupon the final oxidation to fusaric acid may (also) be performed by the FMN-dependent dehydrogenase FUB9. The chain is Reducing polyketide synthase FUB1 from Gibberella moniliformis (strain M3125 / FGSC 7600) (Maize ear and stalk rot fungus).